We begin with the raw amino-acid sequence, 339 residues long: Glyceraldehyde-3-phosphate dehydrogenase (339 aa).

NAD(+) contacts are provided by residues 12-13 (RI), aspartate 39, arginine 84, and serine 127. D-glyceraldehyde 3-phosphate is bound by residues 157-159 (SCT), threonine 188, arginine 203, 216-217 (TG), and arginine 239. The active-site Nucleophile is cysteine 158. An NAD(+)-binding site is contributed by asparagine 320.

It belongs to the glyceraldehyde-3-phosphate dehydrogenase family. As to quaternary structure, homotetramer.

It localises to the cytoplasm. The enzyme catalyses D-glyceraldehyde 3-phosphate + phosphate + NAD(+) = (2R)-3-phospho-glyceroyl phosphate + NADH + H(+). It functions in the pathway carbohydrate degradation; glycolysis; pyruvate from D-glyceraldehyde 3-phosphate: step 1/5. Functionally, catalyzes the oxidative phosphorylation of glyceraldehyde 3-phosphate (G3P) to 1,3-bisphosphoglycerate (BPG) using the cofactor NAD. The first reaction step involves the formation of a hemiacetal intermediate between G3P and a cysteine residue, and this hemiacetal intermediate is then oxidized to a thioester, with concomitant reduction of NAD to NADH. The reduced NADH is then exchanged with the second NAD, and the thioester is attacked by a nucleophilic inorganic phosphate to produce BPG. In Mycobacterium bovis (strain ATCC BAA-935 / AF2122/97), this protein is Glyceraldehyde-3-phosphate dehydrogenase (gap).